The sequence spans 303 residues: Phospholipase A1 2 (303 aa).

Cysteine 6 and cysteine 90 are joined by a disulfide. The active-site Nucleophile is the serine 140. Aspartate 168 (charge relay system) is an active-site residue. A disulfide bridge links cysteine 179 with cysteine 184. The active-site Charge relay system is the histidine 232. 3 disulfides stabilise this stretch: cysteine 247–cysteine 271, cysteine 248–cysteine 296, and cysteine 264–cysteine 269.

The protein belongs to the AB hydrolase superfamily. Lipase family. Expressed by the venom gland.

It localises to the secreted. The catalysed reaction is a 1,2-diacyl-sn-glycero-3-phosphocholine + H2O = a 2-acyl-sn-glycero-3-phosphocholine + a fatty acid + H(+). Functionally, catalyzes the hydrolysis of phosphatidylcholine with phospholipase A1 activity. May act as an allergen and induce hemolytic activity. In Dolichovespula maculata (Bald-faced hornet), this protein is Phospholipase A1 2.